Reading from the N-terminus, the 464-residue chain is Kynurenine 3-monooxygenase (464 aa).

This sequence belongs to the aromatic-ring hydroxylase family. KMO subfamily. FAD is required as a cofactor.

It catalyses the reaction L-kynurenine + NADPH + O2 + H(+) = 3-hydroxy-L-kynurenine + NADP(+) + H2O. The protein operates within cofactor biosynthesis; NAD(+) biosynthesis; quinolinate from L-kynurenine: step 1/3. In terms of biological role, catalyzes the hydroxylation of L-kynurenine (L-Kyn) to form 3-hydroxy-L-kynurenine (L-3OHKyn). Required for synthesis of quinolinic acid. The chain is Kynurenine 3-monooxygenase from Myxococcus xanthus (strain DK1622).